Reading from the N-terminus, the 20-residue chain is Agglutinin beta-2 chain (20 aa).

A disordered region spans residues 1-20 (GRNGKSQSIIVGPWGDRVTN).

Belongs to the jacalin lectin family. In terms of assembly, formed of four alpha chains and four beta chains.

Functionally, D-galactose-specific lectin, binds the T-antigen structure Gal-beta1,3-GalNAc. This is Agglutinin beta-2 chain from Maclura pomifera (Osage orange).